The primary structure comprises 327 residues: Movement protein (327 aa).

Residues 297–327 (SASSSNTENELARVSQNIDLLKNKLKEICGE) are a coiled coil.

Belongs to the caulimoviridae movement protein family. As to quaternary structure, homotrimer, through the coiled-coil domain. Interacts with VAP. May interact (via N-terminus) with host prenylated Rab acceptor protein 1D (PRA1D).

Its subcellular location is the host cell junction. The protein resides in the host plasmodesma. Transports viral genome to neighboring plant cells directly through plasmosdesmata, without any budding. The movement protein allows efficient cell to cell propagation, by bypassing the host cell wall barrier. Acts by forming tubules structures that increase the size exclusion limit (SEL) of plasmodesmata, thereby allowing viral ribonucleocapsids to spread directly to neighboring cells. This is Movement protein from Arabidopsis thaliana (Mouse-ear cress).